Reading from the N-terminus, the 455-residue chain is Growth/differentiation factor 6 (455 aa).

An N-terminal signal peptide occupies residues 1–22 (MDTPRVLLSAVFLISFLWDLPG). Residues 23 to 335 (FQQASISSSS…LPSPGRRRRR (313 aa)) constitute a propeptide that is removed on maturation. The tract at residues 29–93 (SSSSSSAELG…EPPGRGPRVV (65 aa)) is disordered. Over residues 45-76 (SRKEGKMQRAPRDSDAGREGQEPQPRPQDEPR) the composition is skewed to basic and acidic residues. Low complexity predominate over residues 77–91 (AQQPRAQEPPGRGPR). An N-linked (GlcNAc...) asparagine glycan is attached at Asn-114. Disordered stretches follow at residues 244–267 (EAEA…GFGR) and 300–351 (AEAA…KKSR). Positions 330–351 (GRRRRRTAFASRHGKRHGKKSR) are enriched in basic residues. Cystine bridges form between Cys-354-Cys-420, Cys-383-Cys-452, and Cys-387-Cys-454.

This sequence belongs to the TGF-beta family. Homodimer; disulfide-linked.

It is found in the secreted. Its function is as follows. Growth factor that controls proliferation and cellular differentiation in the retina and bone formation. Plays a key role in regulating apoptosis during retinal development. Establishes dorsal-ventral positional information in the retina and controls the formation of the retinotectal map. Required for normal formation of bones and joints in the limbs, skull, digits and axial skeleton. Plays a key role in establishing boundaries between skeletal elements during development. Regulation of GDF6 expression seems to be a mechanism for evolving species-specific changes in skeletal structures. Seems to positively regulate differentiation of chondrogenic tissue through the growth factor receptors subunits BMPR1A, BMPR1B, BMPR2 and ACVR2A, leading to the activation of SMAD1-SMAD5-SMAD8 complex. The regulation of chondrogenic differentiation is inhibited by NOG. Also involved in the induction of adipogenesis from mesenchymal stem cells. This mechanism acts through the growth factor receptors subunits BMPR1A, BMPR2 and ACVR2A and the activation of SMAD1-SMAD5-SMAD8 complex and MAPK14/p38. This is Growth/differentiation factor 6 (GDF6) from Homo sapiens (Human).